We begin with the raw amino-acid sequence, 85 residues long: Beta-toxin BmKAS (85 aa).

The N-terminal stretch at 1-19 is a signal peptide; the sequence is MKTVIFLIVSSLLLIGVKT. One can recognise an LCN-type CS-alpha/beta domain in the interval 20 to 82; it reads DNGYLLDKYT…LWNYNTNKCN (63 aa). 4 disulfides stabilise this stretch: C31/C81, C35/C56, C42/C63, and C46/C65.

In terms of tissue distribution, expressed by the venom gland.

Its subcellular location is the secreted. Its function is as follows. Beta toxins bind voltage-independently at site-4 of sodium channels (Nav) and shift the voltage of activation toward more negative potentials thereby affecting sodium channel activation and promoting spontaneous and repetitive firing. It binds to distinct receptor sites of mammal and insect voltage-gated sodium channels. It displays antinociceptive effect in rat models, which is due to its specific modulation of sodium channels of sensory neurons. It also significantly stimulates the binding of [3H]-ryanodine to ryanodine receptors on the sarcoplasmic reticulum of the skeletal muscle through an indirect mechanism. And it promotes noradrenaline release from the rat hippocampus slice. This chain is Beta-toxin BmKAS, found in Olivierus martensii (Manchurian scorpion).